The chain runs to 130 residues: Small ribosomal subunit protein uS9 (130 aa).

The interval 110–130 (AKERKKYGRKGARARFQFSKR) is disordered. Basic residues predominate over residues 111–130 (KERKKYGRKGARARFQFSKR).

It belongs to the universal ribosomal protein uS9 family.

In Syntrophotalea carbinolica (strain DSM 2380 / NBRC 103641 / GraBd1) (Pelobacter carbinolicus), this protein is Small ribosomal subunit protein uS9.